A 250-amino-acid chain; its full sequence is 2,3-bisphosphoglycerate-dependent phosphoglycerate mutase (250 aa).

Substrate is bound by residues 10-17, 23-24, Arg62, 89-92, Lys100, 116-117, and 185-186; these read RHGESQWN, TG, ERHY, RR, and GN. His11 serves as the catalytic Tele-phosphohistidine intermediate. Glu89 serves as the catalytic Proton donor/acceptor.

It belongs to the phosphoglycerate mutase family. BPG-dependent PGAM subfamily. Homodimer.

The enzyme catalyses (2R)-2-phosphoglycerate = (2R)-3-phosphoglycerate. It functions in the pathway carbohydrate degradation; glycolysis; pyruvate from D-glyceraldehyde 3-phosphate: step 3/5. Functionally, catalyzes the interconversion of 2-phosphoglycerate and 3-phosphoglycerate. In Shigella dysenteriae serotype 1 (strain Sd197), this protein is 2,3-bisphosphoglycerate-dependent phosphoglycerate mutase.